A 274-amino-acid chain; its full sequence is Rhamnulose-1-phosphate aldolase (274 aa).

The active site involves Glu-117. Zn(2+) contacts are provided by His-141, His-143, and His-212.

It belongs to the aldolase class II family. RhaD subfamily. Homotetramer. Zn(2+) is required as a cofactor.

It localises to the cytoplasm. The catalysed reaction is L-rhamnulose 1-phosphate = (S)-lactaldehyde + dihydroxyacetone phosphate. Its pathway is carbohydrate degradation; L-rhamnose degradation; glycerone phosphate from L-rhamnose: step 3/3. Catalyzes the reversible cleavage of L-rhamnulose-1-phosphate to dihydroxyacetone phosphate (DHAP) and L-lactaldehyde. This chain is Rhamnulose-1-phosphate aldolase, found in Escherichia coli O127:H6 (strain E2348/69 / EPEC).